The chain runs to 217 residues: Fucoxanthin-chlorophyll a-c binding protein A, chloroplastic (217 aa).

A chloroplast-targeting transit peptide spans 1–39 (MKSAVMAVACAAAPGLRRPSAFNGAALTTSAKSSSAMKM). The next 3 membrane-spanning stretches (helical) occupy residues 81–101 (IAMLAIAGHLTQQNARLPGML), 122–142 (IPPAGLAQIFAFIGFLELAVM), and 183–203 (GRAAQMGILALMVHEELNNKP).

Belongs to the fucoxanthin chlorophyll protein family. As to quaternary structure, the LHC complex of chromophytic algae is composed of fucoxanthin, chlorophyll A and C bound non-covalently by fucoxanthin chlorophyll proteins (FCPs). The ratio of pigments in this LHC is; fucoxanthin: chlorophyll C: chlorophyll A; (0.6-1): (0.1-0.3): (1).

The protein localises to the plastid. Its subcellular location is the chloroplast thylakoid membrane. The light-harvesting complex (LHC) functions as a light receptor, it captures and delivers excitation energy to photosystems with which it is closely associated. Energy is transferred from the carotenoid and chlorophyll C (or B) to chlorophyll A and the photosynthetic reaction centers where it is used to synthesize ATP and reducing power. The chain is Fucoxanthin-chlorophyll a-c binding protein A, chloroplastic (FCPA) from Macrocystis pyrifera (Giant kelp).